Reading from the N-terminus, the 305-residue chain is 4-diphosphocytidyl-2-C-methyl-D-erythritol kinase (305 aa).

Residue Lys18 is part of the active site. ATP is bound at residue 103 to 113 (PYGAGLGGGSS). The active site involves Asp145.

This sequence belongs to the GHMP kinase family. IspE subfamily.

The catalysed reaction is 4-CDP-2-C-methyl-D-erythritol + ATP = 4-CDP-2-C-methyl-D-erythritol 2-phosphate + ADP + H(+). Its pathway is isoprenoid biosynthesis; isopentenyl diphosphate biosynthesis via DXP pathway; isopentenyl diphosphate from 1-deoxy-D-xylulose 5-phosphate: step 3/6. In terms of biological role, catalyzes the phosphorylation of the position 2 hydroxy group of 4-diphosphocytidyl-2C-methyl-D-erythritol. The polypeptide is 4-diphosphocytidyl-2-C-methyl-D-erythritol kinase (Lawsonia intracellularis (strain PHE/MN1-00)).